Reading from the N-terminus, the 95-residue chain is Secretoglobin family 1C member 1 (95 aa).

An N-terminal signal peptide occupies residues 1-23 (MKGSSALLLVALSLLCVCGLTRA).

Belongs to the secretoglobin family.

It localises to the secreted. This chain is Secretoglobin family 1C member 1 (Scgb1c1), found in Mus musculus (Mouse).